The chain runs to 110 residues: uncharacterized protein (110 aa).

Residues 1–19 form the signal peptide; it reads MKYLVGCLCLAAICLSAGA. N-linked (GlcNAc...) asparagine glycosylation occurs at asparagine 101.

In terms of tissue distribution, component of the acid-soluble and acid-insoluble organic matrix of prismatic shell layers (at protein level).

Its subcellular location is the secreted. This is an uncharacterized protein from Haliotis asinina (Donkey's ear abalone).